A 548-amino-acid chain; its full sequence is CTP synthase (548 aa).

The interval 1-265 (MTRYIFVTGG…DDIICDKLRI (265 aa)) is amidoligase domain. A CTP-binding site is contributed by Ser13. Ser13 contributes to the UTP binding site. Residues 14–19 (SLGKGI) and Asp71 each bind ATP. Residues Asp71 and Glu139 each coordinate Mg(2+). CTP-binding positions include 146-148 (DIE), 186-191 (KTKPTQ), and Lys222. UTP is bound by residues 186–191 (KTKPTQ) and Lys222. One can recognise a Glutamine amidotransferase type-1 domain in the interval 290–541 (NIAMVGKYME…VNAALAYKAA (252 aa)). Gly351 serves as a coordination point for L-glutamine. Catalysis depends on Cys378, which acts as the Nucleophile; for glutamine hydrolysis. L-glutamine contacts are provided by residues 379 to 382 (LGMQ), Glu402, and Arg469. Active-site residues include His514 and Glu516.

Belongs to the CTP synthase family. Homotetramer.

The catalysed reaction is UTP + L-glutamine + ATP + H2O = CTP + L-glutamate + ADP + phosphate + 2 H(+). It catalyses the reaction L-glutamine + H2O = L-glutamate + NH4(+). The enzyme catalyses UTP + NH4(+) + ATP = CTP + ADP + phosphate + 2 H(+). Its pathway is pyrimidine metabolism; CTP biosynthesis via de novo pathway; CTP from UDP: step 2/2. With respect to regulation, allosterically activated by GTP, when glutamine is the substrate; GTP has no effect on the reaction when ammonia is the substrate. The allosteric effector GTP functions by stabilizing the protein conformation that binds the tetrahedral intermediate(s) formed during glutamine hydrolysis. Inhibited by the product CTP, via allosteric rather than competitive inhibition. In terms of biological role, catalyzes the ATP-dependent amination of UTP to CTP with either L-glutamine or ammonia as the source of nitrogen. Regulates intracellular CTP levels through interactions with the four ribonucleotide triphosphates. This chain is CTP synthase, found in Chromohalobacter salexigens (strain ATCC BAA-138 / DSM 3043 / CIP 106854 / NCIMB 13768 / 1H11).